Here is a 535-residue protein sequence, read N- to C-terminus: uncharacterized protein (535 aa).

The helical transmembrane segment at 8-24 (LVVFGSLVFFFGLVKYF) threads the bilayer. Lys50 participates in a covalent cross-link: Glycyl lysine isopeptide (Lys-Gly) (interchain with G-Cter in ubiquitin). 5 residues coordinate Mn(2+): Asp316, Asp327, His412, Glu452, and Glu493.

This sequence belongs to the peptidase M24B family. Mn(2+) serves as cofactor.

The protein localises to the membrane. This is an uncharacterized protein from Saccharomyces cerevisiae (strain ATCC 204508 / S288c) (Baker's yeast).